The following is a 147-amino-acid chain: NADPH-dependent 7-cyano-7-deazaguanine reductase (147 aa).

Residues 1-23 (MQTTHLGKNSPIPQSPEEASLDY) form a disordered region. Cys-46 (thioimide intermediate) is an active-site residue. Asp-53 acts as the Proton donor in catalysis. Substrate-binding positions include 68–70 (VES) and 87–88 (HE).

Belongs to the GTP cyclohydrolase I family. QueF type 1 subfamily.

It localises to the cytoplasm. It catalyses the reaction 7-aminomethyl-7-carbaguanine + 2 NADP(+) = 7-cyano-7-deazaguanine + 2 NADPH + 3 H(+). The protein operates within tRNA modification; tRNA-queuosine biosynthesis. Catalyzes the NADPH-dependent reduction of 7-cyano-7-deazaguanine (preQ0) to 7-aminomethyl-7-deazaguanine (preQ1). This chain is NADPH-dependent 7-cyano-7-deazaguanine reductase, found in Zymomonas mobilis subsp. mobilis (strain ATCC 31821 / ZM4 / CP4).